A 152-amino-acid polypeptide reads, in one-letter code: NADH-quinone oxidoreductase subunit A 2 (152 aa).

3 helical membrane-spanning segments follow: residues 8 to 28 (FGKV…GYVS), 63 to 83 (FYVV…LFPW), and 90 to 110 (LGGF…LGLV).

It belongs to the complex I subunit 3 family. NDH-1 is composed of 14 different subunits. Subunits NuoA, H, J, K, L, M, N constitute the membrane sector of the complex.

It is found in the cell inner membrane. The catalysed reaction is a quinone + NADH + 5 H(+)(in) = a quinol + NAD(+) + 4 H(+)(out). Functionally, NDH-1 shuttles electrons from NADH, via FMN and iron-sulfur (Fe-S) centers, to quinones in the respiratory chain. The immediate electron acceptor for the enzyme in this species is believed to be a menaquinone. Couples the redox reaction to proton translocation (for every two electrons transferred, four hydrogen ions are translocated across the cytoplasmic membrane), and thus conserves the redox energy in a proton gradient. This is NADH-quinone oxidoreductase subunit A 2 from Chloroherpeton thalassium (strain ATCC 35110 / GB-78).